Here is a 71-residue protein sequence, read N- to C-terminus: Large ribosomal subunit protein uL29 (71 aa).

This sequence belongs to the universal ribosomal protein uL29 family. In terms of assembly, part of the 50S ribosomal subunit. Interacts with protein L23.

In terms of biological role, stabilizes the tertiary rRNA structure within the 23S rRNA domain (domain I) to which it binds. Located at the polypeptide exit tunnel on the outside of the subunit. This chain is Large ribosomal subunit protein uL29 (rpl29), found in Haloarcula marismortui (strain ATCC 43049 / DSM 3752 / JCM 8966 / VKM B-1809) (Halobacterium marismortui).